The primary structure comprises 316 residues: Methionyl-tRNA formyltransferase (316 aa).

112 to 115 provides a ligand contact to (6S)-5,6,7,8-tetrahydrofolate; sequence SLLP.

It belongs to the Fmt family.

It catalyses the reaction L-methionyl-tRNA(fMet) + (6R)-10-formyltetrahydrofolate = N-formyl-L-methionyl-tRNA(fMet) + (6S)-5,6,7,8-tetrahydrofolate + H(+). Functionally, attaches a formyl group to the free amino group of methionyl-tRNA(fMet). The formyl group appears to play a dual role in the initiator identity of N-formylmethionyl-tRNA by promoting its recognition by IF2 and preventing the misappropriation of this tRNA by the elongation apparatus. This chain is Methionyl-tRNA formyltransferase, found in Actinobacillus pleuropneumoniae serotype 5b (strain L20).